The chain runs to 399 residues: Succinate--CoA ligase [ADP-forming] subunit beta (399 aa).

Positions 9-254 (KELLAKYGVG…ETEEDPAEIE (246 aa)) constitute an ATP-grasp domain. Residues Lys46, 53–55 (GRG), Val112, and Glu117 contribute to the ATP site. 2 residues coordinate Mg(2+): Asn209 and Asp223. Residues Asn274 and 331 to 333 (GIM) each bind substrate.

It belongs to the succinate/malate CoA ligase beta subunit family. In terms of assembly, heterotetramer of two alpha and two beta subunits. Mg(2+) is required as a cofactor.

It catalyses the reaction succinate + ATP + CoA = succinyl-CoA + ADP + phosphate. It carries out the reaction GTP + succinate + CoA = succinyl-CoA + GDP + phosphate. It functions in the pathway carbohydrate metabolism; tricarboxylic acid cycle; succinate from succinyl-CoA (ligase route): step 1/1. Succinyl-CoA synthetase functions in the citric acid cycle (TCA), coupling the hydrolysis of succinyl-CoA to the synthesis of either ATP or GTP and thus represents the only step of substrate-level phosphorylation in the TCA. The beta subunit provides nucleotide specificity of the enzyme and binds the substrate succinate, while the binding sites for coenzyme A and phosphate are found in the alpha subunit. The polypeptide is Succinate--CoA ligase [ADP-forming] subunit beta (Novosphingobium aromaticivorans (strain ATCC 700278 / DSM 12444 / CCUG 56034 / CIP 105152 / NBRC 16084 / F199)).